Here is a 288-residue protein sequence, read N- to C-terminus: Glucose-1-phosphate thymidylyltransferase (288 aa).

Residues Asp108 and Asp223 each coordinate Mg(2+).

It belongs to the glucose-1-phosphate thymidylyltransferase family. Homotetramer. Mg(2+) is required as a cofactor.

The catalysed reaction is dTTP + alpha-D-glucose 1-phosphate + H(+) = dTDP-alpha-D-glucose + diphosphate. Its function is as follows. Catalyzes the formation of dTDP-glucose, from dTTP and glucose 1-phosphate, as well as its pyrophosphorolysis. In Neisseria meningitidis serogroup A / serotype 4A (strain DSM 15465 / Z2491), this protein is Glucose-1-phosphate thymidylyltransferase (rmlA1).